Reading from the N-terminus, the 765-residue chain is Probable ATP-dependent RNA helicase DDX27 (765 aa).

Residues Ser23, Ser25, and Ser48 each carry the phosphoserine modification. Over residues Leu43–Thr63 the composition is skewed to acidic residues. 2 disordered regions span residues Leu43–Ala83 and Lys111–Asp179. Residues Phe55–Phe57 carry the Required for interaction with the PEBOW complex motif. A compositionally biased stretch (basic and acidic residues) spans Glu129–Asp156. Phosphoserine occurs at positions 135 and 146. Acidic residues predominate over residues Thr157 to Glu172. Positions Lys164–Lys169 match the Nuclear localization signal motif. Residues Leu187–Lys215 carry the Q motif motif. Residues Ile218 to Ile392 form the Helicase ATP-binding domain. Ala231–Thr238 lines the ATP pocket. Residues Asp340–Asp343 carry the DEAD box motif. Positions Leu426–Ile572 constitute a Helicase C-terminal domain. The span at Val716–Ser725 shows a compositional bias: basic residues.

Belongs to the DEAD box helicase family. DDX27/DRS1 subfamily. As to quaternary structure, associates with PeBoW complex, composed of BOP1, PES1 and WDR12. Interacts directly with BOP1 and PES1.

It localises to the nucleus. The protein resides in the nucleolus. Its subcellular location is the chromosome. It catalyses the reaction ATP + H2O = ADP + phosphate + H(+). In terms of biological role, probable ATP-dependent RNA helicase. Component of the nucleolar ribosomal RNA (rRNA) processing machinery that regulates 3' end formation of ribosomal 47S rRNA. This is Probable ATP-dependent RNA helicase DDX27 (DDX27) from Homo sapiens (Human).